Consider the following 297-residue polypeptide: Formamidopyrimidine-DNA glycosylase (297 aa).

Pro2 functions as the Schiff-base intermediate with DNA in the catalytic mechanism. Residue Glu3 is the Proton donor of the active site. Lys58 serves as the catalytic Proton donor; for beta-elimination activity. DNA-binding residues include His106, Arg125, and Arg168. An FPG-type zinc finger spans residues 259–295 (RVYDREGLACTARGCRGVVRRVVQSGRSTFFCEVCQP). Arg285 functions as the Proton donor; for delta-elimination activity in the catalytic mechanism.

The protein belongs to the FPG family. As to quaternary structure, monomer. The cofactor is Zn(2+).

The enzyme catalyses Hydrolysis of DNA containing ring-opened 7-methylguanine residues, releasing 2,6-diamino-4-hydroxy-5-(N-methyl)formamidopyrimidine.. It catalyses the reaction 2'-deoxyribonucleotide-(2'-deoxyribose 5'-phosphate)-2'-deoxyribonucleotide-DNA = a 3'-end 2'-deoxyribonucleotide-(2,3-dehydro-2,3-deoxyribose 5'-phosphate)-DNA + a 5'-end 5'-phospho-2'-deoxyribonucleoside-DNA + H(+). In terms of biological role, involved in base excision repair of DNA damaged by oxidation or by mutagenic agents. Acts as a DNA glycosylase that recognizes and removes damaged bases. Has a preference for oxidized purines, such as 7,8-dihydro-8-oxoguanine (8-oxoG). Has AP (apurinic/apyrimidinic) lyase activity and introduces nicks in the DNA strand. Cleaves the DNA backbone by beta-delta elimination to generate a single-strand break at the site of the removed base with both 3'- and 5'-phosphates. This Methylobacterium nodulans (strain LMG 21967 / CNCM I-2342 / ORS 2060) protein is Formamidopyrimidine-DNA glycosylase.